A 311-amino-acid chain; its full sequence is Bifunctional protein FolD (311 aa).

NADP(+)-binding positions include 184-186, I209, and I250; that span reads GAS.

This sequence belongs to the tetrahydrofolate dehydrogenase/cyclohydrolase family. As to quaternary structure, homodimer.

The enzyme catalyses (6R)-5,10-methylene-5,6,7,8-tetrahydrofolate + NADP(+) = (6R)-5,10-methenyltetrahydrofolate + NADPH. It carries out the reaction (6R)-5,10-methenyltetrahydrofolate + H2O = (6R)-10-formyltetrahydrofolate + H(+). It participates in one-carbon metabolism; tetrahydrofolate interconversion. Its function is as follows. Catalyzes the oxidation of 5,10-methylenetetrahydrofolate to 5,10-methenyltetrahydrofolate and then the hydrolysis of 5,10-methenyltetrahydrofolate to 10-formyltetrahydrofolate. The protein is Bifunctional protein FolD of Gluconacetobacter diazotrophicus (strain ATCC 49037 / DSM 5601 / CCUG 37298 / CIP 103539 / LMG 7603 / PAl5).